Consider the following 86-residue polypeptide: UPF0512 protein V (86 aa).

Belongs to the UPF0512 family.

In Dictyostelium discoideum (Social amoeba), this protein is UPF0512 protein V.